Consider the following 398-residue polypeptide: Tyrosine--tRNA ligase (398 aa).

The short motif at 48–57 (PTGADIHLGH) is the 'HIGH' region element. The 'KMSKS' region signature appears at 235 to 239 (KMSKS). Lys-238 is a binding site for ATP. Residues 334–398 (VKLAYLLGAT…GKNKFMRLVP (65 aa)) form the S4 RNA-binding domain.

Belongs to the class-I aminoacyl-tRNA synthetase family. TyrS type 2 subfamily. As to quaternary structure, homodimer.

The protein localises to the cytoplasm. It carries out the reaction tRNA(Tyr) + L-tyrosine + ATP = L-tyrosyl-tRNA(Tyr) + AMP + diphosphate + H(+). In terms of biological role, catalyzes the attachment of tyrosine to tRNA(Tyr) in a two-step reaction: tyrosine is first activated by ATP to form Tyr-AMP and then transferred to the acceptor end of tRNA(Tyr). This chain is Tyrosine--tRNA ligase, found in Nostoc sp. (strain PCC 7120 / SAG 25.82 / UTEX 2576).